We begin with the raw amino-acid sequence, 163 residues long: 6,7-dimethyl-8-ribityllumazine synthase (163 aa).

5-amino-6-(D-ribitylamino)uracil contacts are provided by residues phenylalanine 27, 58-60, and 87-89; these read ALE and CVI. (2S)-2-hydroxy-3-oxobutyl phosphate is bound at residue 92 to 93; the sequence is DT. Histidine 95 acts as the Proton donor in catalysis. Asparagine 120 serves as a coordination point for 5-amino-6-(D-ribitylamino)uracil. Position 134 (arginine 134) interacts with (2S)-2-hydroxy-3-oxobutyl phosphate.

The protein belongs to the DMRL synthase family.

It catalyses the reaction (2S)-2-hydroxy-3-oxobutyl phosphate + 5-amino-6-(D-ribitylamino)uracil = 6,7-dimethyl-8-(1-D-ribityl)lumazine + phosphate + 2 H2O + H(+). The protein operates within cofactor biosynthesis; riboflavin biosynthesis; riboflavin from 2-hydroxy-3-oxobutyl phosphate and 5-amino-6-(D-ribitylamino)uracil: step 1/2. Catalyzes the formation of 6,7-dimethyl-8-ribityllumazine by condensation of 5-amino-6-(D-ribitylamino)uracil with 3,4-dihydroxy-2-butanone 4-phosphate. This is the penultimate step in the biosynthesis of riboflavin. The protein is 6,7-dimethyl-8-ribityllumazine synthase of Afipia carboxidovorans (strain ATCC 49405 / DSM 1227 / KCTC 32145 / OM5) (Oligotropha carboxidovorans).